Consider the following 83-residue polypeptide: Putative snRNP Sm-like protein (83 aa).

In terms of domain architecture, Sm spans 9–81 (KPMDVLKSAL…VIFVSPSKGD (73 aa)).

This sequence belongs to the snRNP Sm proteins family.

In Thermoplasma acidophilum (strain ATCC 25905 / DSM 1728 / JCM 9062 / NBRC 15155 / AMRC-C165), this protein is Putative snRNP Sm-like protein.